The primary structure comprises 215 residues: Cytochrome b6 (215 aa).

A helical membrane pass occupies residues 32 to 52 (IFYCLGGITLTCFLVQVATGF). A heme c-binding site is contributed by cysteine 35. The heme b site is built by histidine 86 and histidine 100. The next 3 membrane-spanning stretches (helical) occupy residues 90-110 (ASMMVLMMILHVFRVYLTGGF), 116-136 (LTWVTGVVLAVLTASFGVTGY), and 186-206 (LHTFVLPLVSAVFMLIHFLMI). The heme b site is built by histidine 187 and histidine 202.

It belongs to the cytochrome b family. PetB subfamily. In terms of assembly, the 4 large subunits of the cytochrome b6-f complex are cytochrome b6, subunit IV (17 kDa polypeptide, PetD), cytochrome f and the Rieske protein, while the 4 small subunits are PetG, PetL, PetM and PetN. The complex functions as a dimer. It depends on heme b as a cofactor. Requires heme c as cofactor.

It is found in the plastid. The protein localises to the chloroplast thylakoid membrane. Functionally, component of the cytochrome b6-f complex, which mediates electron transfer between photosystem II (PSII) and photosystem I (PSI), cyclic electron flow around PSI, and state transitions. This chain is Cytochrome b6, found in Pelargonium hortorum (Common geranium).